Consider the following 248-residue polypeptide: Protein GrpE (248 aa).

Positions 229–248 (AAPKEDTLPAQENQSSPADS) are disordered. Residues 238-248 (AQENQSSPADS) are compositionally biased toward polar residues.

It belongs to the GrpE family. In terms of assembly, homodimer.

The protein localises to the cytoplasm. In terms of biological role, participates actively in the response to hyperosmotic and heat shock by preventing the aggregation of stress-denatured proteins, in association with DnaK and GrpE. It is the nucleotide exchange factor for DnaK and may function as a thermosensor. Unfolded proteins bind initially to DnaJ; upon interaction with the DnaJ-bound protein, DnaK hydrolyzes its bound ATP, resulting in the formation of a stable complex. GrpE releases ADP from DnaK; ATP binding to DnaK triggers the release of the substrate protein, thus completing the reaction cycle. Several rounds of ATP-dependent interactions between DnaJ, DnaK and GrpE are required for fully efficient folding. This Nostoc sp. (strain PCC 7120 / SAG 25.82 / UTEX 2576) protein is Protein GrpE.